The sequence spans 285 residues: MTTTDRIAAAFARVSEAGRAAALIPYIAAGDPSPQATVPLMHALVRAGADLVELGVPFSDPMADGPVVQRAAERAIAQGVGLRRVLELVADFRRDDSVTPVVLMGYANPIERMGQRAFAQAAQAAGVDGVLVVDYPPEEVDEFAAMLAEAGVAPIFLLAPTSTEARIEAIGRVARGYVYYVSLKGVTGAGSLDTDDVARKLALIRRHVHIPVGVGFGIRDAASAQRIAAHADAVVIGSKLIETMEQAGAQAGADQKNEAAIAAAQQWLHTIRLALDDVKRENAPA.

Active-site proton acceptor residues include Glu53 and Asp64.

This sequence belongs to the TrpA family. Tetramer of two alpha and two beta chains.

The catalysed reaction is (1S,2R)-1-C-(indol-3-yl)glycerol 3-phosphate + L-serine = D-glyceraldehyde 3-phosphate + L-tryptophan + H2O. The protein operates within amino-acid biosynthesis; L-tryptophan biosynthesis; L-tryptophan from chorismate: step 5/5. Its function is as follows. The alpha subunit is responsible for the aldol cleavage of indoleglycerol phosphate to indole and glyceraldehyde 3-phosphate. This chain is Tryptophan synthase alpha chain, found in Bordetella bronchiseptica (strain ATCC BAA-588 / NCTC 13252 / RB50) (Alcaligenes bronchisepticus).